Consider the following 292-residue polypeptide: Protease HtpX (292 aa).

A run of 2 helical transmembrane segments spans residues 5 to 25 (IFLF…VMSV) and 34 to 54 (SGLL…SLLL). Position 140 (histidine 140) interacts with Zn(2+). Glutamate 141 is a catalytic residue. Residue histidine 144 participates in Zn(2+) binding. The next 2 helical transmembrane spans lie at 155 to 175 (LLQG…GGII) and 193 to 213 (IIVF…AMWF). Residue glutamate 218 coordinates Zn(2+).

It belongs to the peptidase M48B family. Zn(2+) serves as cofactor.

The protein resides in the cell inner membrane. The chain is Protease HtpX from Xanthomonas oryzae pv. oryzae (strain PXO99A).